The sequence spans 404 residues: MRTWPTPDVPPLPRTGAPAPVLVHDSTTQSLVEAAPGATATLYACGITPYDATHLGHANTYLAFDLLQRAWLDAGKTVVYTSNVTDVDDPLLERATATGVDWRELAREQTELYRTDMTALRMLPPATWTGAVESIPAVVEAVTALLDAGAAYRVDADVYADLSADPGFGRVAGLDDATMRALFAERGGDPDRPGKKHPLDPALWRGEQPGEPSWDGGKLGPGRPGWHIECAVIARDGLGLPFDVQGGGADLLFPHHEMSTSHARLLAGGAARVHVHAGLLAYDGHKMSKSRGNLVFVSRLLAAGTDPMTVRLALLAHHYREEWEWTDVELRTAQRRLDTWTSAILSTHDDGEPADTVLDAVRAALAADLDAPAALAAVDRWAANPGGDAGVVVATVDALLGIEL.

The tract at residues 1–20 is disordered; sequence MRTWPTPDVPPLPRTGAPAP. Residue C45 coordinates Zn(2+). L-cysteinyl-5'-AMP is bound by residues 45–48, T60, and 83–85; these read CGIT and NVT. A 'HIGH' region motif is present at residues 47 to 57; sequence ITPYDATHLGH. The short motif at 185-190 is the 'ERGGDP' region element; that stretch reads ERGGDP. The segment at 185–216 is disordered; that stretch reads ERGGDPDRPGKKHPLDPALWRGEQPGEPSWDG. Basic and acidic residues predominate over residues 186 to 199; the sequence is RGGDPDRPGKKHPL. An L-cysteinyl-5'-AMP-binding site is contributed by W226. Residue C230 coordinates Zn(2+). An L-cysteinyl-5'-AMP-binding site is contributed by 248 to 250; that stretch reads GAD. H255 provides a ligand contact to Zn(2+). Residue L280 coordinates L-cysteinyl-5'-AMP. Residues 286 to 290 carry the 'KMSKS' region motif; it reads KMSKS.

Belongs to the class-I aminoacyl-tRNA synthetase family. MshC subfamily. Monomer. Zn(2+) serves as cofactor.

It carries out the reaction 1D-myo-inositol 2-amino-2-deoxy-alpha-D-glucopyranoside + L-cysteine + ATP = 1D-myo-inositol 2-(L-cysteinylamino)-2-deoxy-alpha-D-glucopyranoside + AMP + diphosphate + H(+). Its function is as follows. Catalyzes the ATP-dependent condensation of GlcN-Ins and L-cysteine to form L-Cys-GlcN-Ins. The protein is L-cysteine:1D-myo-inositol 2-amino-2-deoxy-alpha-D-glucopyranoside ligase of Xylanimonas cellulosilytica (strain DSM 15894 / JCM 12276 / CECT 5975 / KCTC 9989 / LMG 20990 / NBRC 107835 / XIL07).